The sequence spans 639 residues: Threonine--tRNA ligase (639 aa).

The TGS domain maps to 1-61 (MIRITLPDNS…DHDARLQIIT (61 aa)). Positions 242–533 (DHRRLGRELD…LIEQHAGALP (292 aa)) are catalytic. Zn(2+)-binding residues include C333, H384, and H510.

It belongs to the class-II aminoacyl-tRNA synthetase family. Homodimer. It depends on Zn(2+) as a cofactor.

It localises to the cytoplasm. The catalysed reaction is tRNA(Thr) + L-threonine + ATP = L-threonyl-tRNA(Thr) + AMP + diphosphate + H(+). Catalyzes the attachment of threonine to tRNA(Thr) in a two-step reaction: L-threonine is first activated by ATP to form Thr-AMP and then transferred to the acceptor end of tRNA(Thr). Also edits incorrectly charged L-seryl-tRNA(Thr). In Paracidovorax citrulli (strain AAC00-1) (Acidovorax citrulli), this protein is Threonine--tRNA ligase.